We begin with the raw amino-acid sequence, 419 residues long: Dynein regulatory complex protein 9 (419 aa).

Disordered regions lie at residues Met-1–Val-47 and Ser-393–Lys-419. Residues Glu-34–Ser-44 are compositionally biased toward acidic residues. Residues Glu-371–Glu-400 form the IQ domain.

This sequence belongs to the DRC9 family. Component of the nexin-dynein regulatory complex (N-DRC). Interacts (via IQ domain) with CALM when calcium levels are low. Does not interact with CALM in the presence of Ca(2+). Interacts with the HSP70 proteins HSPA1L and HSPA8. May form a complex with CAMK4 and HSP70.

The protein localises to the cytoplasm. It localises to the cell projection. The protein resides in the cilium. It is found in the flagellum. Its subcellular location is the cytoskeleton. The protein localises to the flagellum axoneme. In terms of biological role, component of the nexin-dynein regulatory complex (N-DRC), a key regulator of ciliary/flagellar motility which maintains the alignment and integrity of the distal axoneme and regulates microtubule sliding in motile axonemes. Binds calmodulin when cellular Ca(2+) levels are low and thereby contributes to the regulation of calcium and calmodulin-dependent protein kinase IV (CAMK4) activity; contributes to the regulation of CAMK4 signaling cascades. Required for normal axoneme assembly in sperm flagella, normal sperm tail formation and for male fertility. The protein is Dynein regulatory complex protein 9 (Iqcg) of Rattus norvegicus (Rat).